The following is a 336-amino-acid chain: MEPRAIVLKLIEHKHISVEEAEFFMNRVMKGEVSEILLSSFVTAMRAKGESVDEVLGCTLALRKNALKPKTVFPFDLLDTCGTGGDGQGTINVSTLSAITLASLGVKVAKHGNRSVSSHTGSSDILARLGYQTEATQEEVEAHLISRGFTFLFAPMWHPSMKYAGSVRKELGFRTVFNMIGPLSNPFSPQFQIIGVYQPELTELFIKVLQYLGLKRALVCHSRDGLDEFSIFQTTDYTLLENEVISRHSFDPRTLGFSSLKREEVYADSSEHAEVLARRVLNSEPIAGTHAVALNAGAGLFVMGKVKTIEQGYKIAWEALLSGKTRKYFEDLISKE.

5-phospho-alpha-D-ribose 1-diphosphate-binding positions include G82, 85-86, T90, 92-95, 110-118, and S122; these read GD, NVST, and KHGNRSVSS. G82 contributes to the anthranilate binding site. S94 lines the Mg(2+) pocket. N113 contributes to the anthranilate binding site. Anthranilate is bound at residue R168. Residues D227 and E228 each contribute to the Mg(2+) site.

It belongs to the anthranilate phosphoribosyltransferase family. As to quaternary structure, homodimer. Mg(2+) serves as cofactor.

The enzyme catalyses N-(5-phospho-beta-D-ribosyl)anthranilate + diphosphate = 5-phospho-alpha-D-ribose 1-diphosphate + anthranilate. It participates in amino-acid biosynthesis; L-tryptophan biosynthesis; L-tryptophan from chorismate: step 2/5. Catalyzes the transfer of the phosphoribosyl group of 5-phosphorylribose-1-pyrophosphate (PRPP) to anthranilate to yield N-(5'-phosphoribosyl)-anthranilate (PRA). The sequence is that of Anthranilate phosphoribosyltransferase from Leptospira borgpetersenii serovar Hardjo-bovis (strain JB197).